Reading from the N-terminus, the 137-residue chain is Small ribosomal subunit protein uS8 (137 aa).

The protein belongs to the universal ribosomal protein uS8 family. In terms of assembly, part of the 30S ribosomal subunit. Contacts proteins S5 and S12.

In terms of biological role, one of the primary rRNA binding proteins, it binds directly to 16S rRNA central domain where it helps coordinate assembly of the platform of the 30S subunit. The protein is Small ribosomal subunit protein uS8 of Metamycoplasma arthritidis (strain 158L3-1) (Mycoplasma arthritidis).